The following is a 119-amino-acid chain: MLLKSTTRHVRIYTAEIQKNELIPSETVLTLDVDPDNEFVWPEESLQKVYRQFDALVESNSGEDLTEYNLRRIGSDLEAFIRDLLQKGELRYNLDSRVMNFSMGLPQMDHPDSQGAYLQ.

The protein belongs to the complex I NdhM subunit family. As to quaternary structure, NDH-1 can be composed of about 15 different subunits; different subcomplexes with different compositions have been identified which probably have different functions.

The protein localises to the cellular thylakoid membrane. It carries out the reaction a plastoquinone + NADH + (n+1) H(+)(in) = a plastoquinol + NAD(+) + n H(+)(out). It catalyses the reaction a plastoquinone + NADPH + (n+1) H(+)(in) = a plastoquinol + NADP(+) + n H(+)(out). NDH-1 shuttles electrons from an unknown electron donor, via FMN and iron-sulfur (Fe-S) centers, to quinones in the respiratory and/or the photosynthetic chain. The immediate electron acceptor for the enzyme in this species is believed to be plastoquinone. Couples the redox reaction to proton translocation, and thus conserves the redox energy in a proton gradient. Cyanobacterial NDH-1 also plays a role in inorganic carbon-concentration. The protein is NAD(P)H-quinone oxidoreductase subunit M of Picosynechococcus sp. (strain ATCC 27264 / PCC 7002 / PR-6) (Agmenellum quadruplicatum).